A 346-amino-acid polypeptide reads, in one-letter code: (R,R)-butanediol dehydrogenase (346 aa).

The Zn(2+) site is built by C37, H70, and E152.

This sequence belongs to the zinc-containing alcohol dehydrogenase family. As to quaternary structure, homotetramer. Interacts with BrxC. Requires Zn(2+) as cofactor.

It is found in the cytoplasm. The protein localises to the secreted. It catalyses the reaction (R,R)-butane-2,3-diol + NAD(+) = (R)-acetoin + NADH + H(+). This is (R,R)-butanediol dehydrogenase from Bacillus subtilis (strain 168).